The chain runs to 194 residues: Fe/S biogenesis protein NfuA (194 aa).

Residues Cys152 and Cys155 each coordinate [4Fe-4S] cluster.

It belongs to the NfuA family. As to quaternary structure, homodimer. [4Fe-4S] cluster serves as cofactor.

In terms of biological role, involved in iron-sulfur cluster biogenesis. Binds a 4Fe-4S cluster, can transfer this cluster to apoproteins, and thereby intervenes in the maturation of Fe/S proteins. Could also act as a scaffold/chaperone for damaged Fe/S proteins. The polypeptide is Fe/S biogenesis protein NfuA (Pseudomonas fluorescens (strain Pf0-1)).